The following is a 420-amino-acid chain: 3-oxo-tetronate kinase (420 aa).

ATP is bound by residues serine 258, 360–363, and glycine 403; that span reads GGET.

Belongs to the four-carbon acid sugar kinase family.

It carries out the reaction 3-dehydro-L-erythronate + ATP = 3-dehydro-4-O-phospho-L-erythronate + ADP + H(+). It catalyses the reaction 3-dehydro-D-erythronate + ATP = 3-dehydro-4-O-phospho-D-erythronate + ADP + H(+). Functionally, catalyzes the ATP-dependent phosphorylation of 3-oxo-tetronate to 3-oxo-tetronate 4-phosphate. The sequence is that of 3-oxo-tetronate kinase from Salmonella typhimurium (strain LT2 / SGSC1412 / ATCC 700720).